Reading from the N-terminus, the 715-residue chain is MRKLIFSLVTSFFLLLPSVIRADEGMWFLMFIKRLNERDMQKKGLQLTAEEIYSINNNSLKNAIVQFNGGCTASIISPDGLVITNHHCGYGAIAGLSTPEHNYLKDGYWAKDRSQELPPKSLYVRFFVRMDNVTDRMLSVVNSSMSEKERQDALNREMEKIQKENSEGGKYVVSVRPFFQGNEYYYFVYQDFKDVRFVGTPPENVGKFGGDTDNWEWPRHTGDFSVFRVYTDKDGNPAPYSPNNIPMKAKKYLNVTLKGVQENDFAMILGYPGRTNRWVSSHWVDQQVKYGYPAWVEASKTAMDAMKAHMDKDKAVRLKYASRYASLANYWKNRQGMIDALTAHKTADLKRAAEKKFAVWANKPENKAEYGNVLSDLATYFEKTNQEAANHNYLLLFFRASRIVPQANGYVKQLNTYLNSSSDQEKQQIRERIAKELDAYYSESYLPAEIDLFADNLKLYADKATDIPQEIAQIKSQYNGDFRKFAAEVFARSIFTTKENFENFMNNPSSDALQSDPIAQIARVMIDKYYNSQSEALKDGYEKAFRKYVKGMRDSKVSLILYPDANSTLRLTYGSVKSLPKDKRNHDVKRNYYTTFKTMLEKYKPGDAEFDMPKKFVEMYEKKDFGRYLDKDGTMHVCFLTNNDITGGNSGSPVMNGKGELIGLAFDGNIEAMAGDVIFDKKLQRTIVVDIRYVLWCIDTFGGAKHIVDEMTIIQ.

Residues 1–22 (MRKLIFSLVTSFFLLLPSVIRA) form the signal peptide. Active-site charge relay system residues include histidine 87, aspartate 223, and serine 650.

It belongs to the peptidase S46 family.

Functionally, catalyzes the removal of dipeptides from the N-terminus of oligopeptides. Most potently cleaves the synthetic substrate Met-Leu-methylcoumaryl-7-amide (Met-Leu-MCA), followed by Lys-Ala-, Leu-Arg- &gt; Leu-Asp-, Leu-Glu-, &gt;Leu-Lys, and &gt;Val-Arg-MCA, while this enzyme does not hydrolyze Gly-Arg-, Gly-Gly-, Lys-Lys-, or Gly-Pro-MCA. The protein is Dipeptidyl-peptidase 7 (dpp7) of Capnocytophaga gingivalis.